The sequence spans 461 residues: Glycogen synthase (461 aa).

Position 15 (Lys-15) interacts with ADP-alpha-D-glucose.

This sequence belongs to the glycosyltransferase 1 family. Bacterial/plant glycogen synthase subfamily.

It catalyses the reaction [(1-&gt;4)-alpha-D-glucosyl](n) + ADP-alpha-D-glucose = [(1-&gt;4)-alpha-D-glucosyl](n+1) + ADP + H(+). It functions in the pathway glycan biosynthesis; glycogen biosynthesis. In terms of biological role, synthesizes alpha-1,4-glucan chains using ADP-glucose. In Fusobacterium nucleatum subsp. nucleatum (strain ATCC 25586 / DSM 15643 / BCRC 10681 / CIP 101130 / JCM 8532 / KCTC 2640 / LMG 13131 / VPI 4355), this protein is Glycogen synthase.